A 499-amino-acid polypeptide reads, in one-letter code: Probable dipeptidase B (499 aa).

The active site involves Cys26.

The protein belongs to the peptidase C69 family.

It carries out the reaction an L-aminoacyl-L-amino acid + H2O = 2 an L-alpha-amino acid. This is Probable dipeptidase B (pepDB) from Streptococcus pyogenes serotype M6 (strain ATCC BAA-946 / MGAS10394).